The chain runs to 449 residues: tRNA-2-methylthio-N(6)-dimethylallyladenosine synthase (449 aa).

The region spanning 4-119 is the MTTase N-terminal domain; the sequence is RTFHIETFGC…APQALDRLVE (116 aa). [4Fe-4S] cluster is bound by residues Cys-13, Cys-48, Cys-82, Cys-158, Cys-162, and Cys-165. Positions 144–375 constitute a Radical SAM core domain; it reads GAVPASVFVN…QTLQNRLTER (232 aa). Residues 378 to 446 form the TRAM domain; that stretch reads QDMVGKKVEV…KHSLLAEQAG (69 aa).

It belongs to the methylthiotransferase family. MiaB subfamily. Monomer. [4Fe-4S] cluster is required as a cofactor.

It is found in the cytoplasm. The enzyme catalyses N(6)-dimethylallyladenosine(37) in tRNA + (sulfur carrier)-SH + AH2 + 2 S-adenosyl-L-methionine = 2-methylsulfanyl-N(6)-dimethylallyladenosine(37) in tRNA + (sulfur carrier)-H + 5'-deoxyadenosine + L-methionine + A + S-adenosyl-L-homocysteine + 2 H(+). Its function is as follows. Catalyzes the methylthiolation of N6-(dimethylallyl)adenosine (i(6)A), leading to the formation of 2-methylthio-N6-(dimethylallyl)adenosine (ms(2)i(6)A) at position 37 in tRNAs that read codons beginning with uridine. The polypeptide is tRNA-2-methylthio-N(6)-dimethylallyladenosine synthase (Nitratidesulfovibrio vulgaris (strain DP4) (Desulfovibrio vulgaris)).